The primary structure comprises 273 residues: Dermonecrotic toxin LapSicTox-alphaIB1ai (273 aa).

Residue histidine 5 is part of the active site. Mg(2+) is bound by residues glutamate 25 and aspartate 27. The active-site Nucleophile is the histidine 41. 2 cysteine pairs are disulfide-bonded: cysteine 45–cysteine 51 and cysteine 47–cysteine 190. Aspartate 85 is a binding site for Mg(2+). Residue asparagine 250 is glycosylated (N-linked (GlcNAc...) asparagine).

The protein belongs to the arthropod phospholipase D family. Class II subfamily. The cofactor is Mg(2+). In terms of tissue distribution, expressed by the venom gland.

Its subcellular location is the secreted. The catalysed reaction is an N-(acyl)-sphingosylphosphocholine = an N-(acyl)-sphingosyl-1,3-cyclic phosphate + choline. It carries out the reaction an N-(acyl)-sphingosylphosphoethanolamine = an N-(acyl)-sphingosyl-1,3-cyclic phosphate + ethanolamine. It catalyses the reaction a 1-acyl-sn-glycero-3-phosphocholine = a 1-acyl-sn-glycero-2,3-cyclic phosphate + choline. The enzyme catalyses a 1-acyl-sn-glycero-3-phosphoethanolamine = a 1-acyl-sn-glycero-2,3-cyclic phosphate + ethanolamine. In terms of biological role, dermonecrotic toxins cleave the phosphodiester linkage between the phosphate and headgroup of certain phospholipids (sphingolipid and lysolipid substrates), forming an alcohol (often choline) and a cyclic phosphate. This toxin acts on sphingomyelin (SM). It may also act on ceramide phosphoethanolamine (CPE), lysophosphatidylcholine (LPC) and lysophosphatidylethanolamine (LPE), but not on lysophosphatidylserine (LPS), and lysophosphatidylglycerol (LPG). It acts by transphosphatidylation, releasing exclusively cyclic phosphate products as second products. Induces dermonecrosis, hemolysis, increased vascular permeability, edema, inflammatory response, and platelet aggregation. This is Dermonecrotic toxin LapSicTox-alphaIB1ai from Loxosceles apachea (Apache recluse spider).